The primary structure comprises 375 residues: Heat-inducible transcription repressor HrcA (375 aa).

Low complexity predominate over residues 307 to 318 (ATDGATHAAASS). Positions 307 to 331 (ATDGATHAAASSQTENQSGDDTRQA) are disordered.

This sequence belongs to the HrcA family.

In terms of biological role, negative regulator of class I heat shock genes (grpE-dnaK-dnaJ and groELS operons). Prevents heat-shock induction of these operons. The protein is Heat-inducible transcription repressor HrcA of Bifidobacterium adolescentis (strain ATCC 15703 / DSM 20083 / NCTC 11814 / E194a).